The primary structure comprises 215 residues: MGKVYDWFEERLEIQAIADDITSKYVPPHVNIFYCLGGITLTCFLVQVATGFAMTFYYRPTVTEAFSSVQYIMTEVNFGWLIRSVHRWSASMMVLMMILHIFRVYLTGGFKKPRELTWVTGVILAVLTVSFGVTGYSLPWDQIGYWAVKIVTGVPEAIPIIGSPLVELLRGSVSVGQSTLTRFYSLHTFVLPLLTAIFMLMHFLMIRKQGISGPL.

A helical membrane pass occupies residues 32–52; it reads IFYCLGGITLTCFLVQVATGF. Cys35 is a heme c binding site. Residues His86 and His100 each contribute to the heme b site. 3 consecutive transmembrane segments (helical) span residues 90–110, 116–136, and 186–206; these read ASMMVLMMILHIFRVYLTGGF, LTWVTGVILAVLTVSFGVTGY, and LHTFVLPLLTAIFMLMHFLMI. His187 and His202 together coordinate heme b.

Belongs to the cytochrome b family. PetB subfamily. The 4 large subunits of the cytochrome b6-f complex are cytochrome b6, subunit IV (17 kDa polypeptide, PetD), cytochrome f and the Rieske protein, while the 4 small subunits are PetG, PetL, PetM and PetN. The complex functions as a dimer. It depends on heme b as a cofactor. Requires heme c as cofactor.

The protein resides in the plastid. The protein localises to the chloroplast thylakoid membrane. Its function is as follows. Component of the cytochrome b6-f complex, which mediates electron transfer between photosystem II (PSII) and photosystem I (PSI), cyclic electron flow around PSI, and state transitions. This is Cytochrome b6 from Marchantia polymorpha (Common liverwort).